Reading from the N-terminus, the 447-residue chain is UDP-N-acetylmuramate--L-alanine ligase (447 aa).

115–121 contributes to the ATP binding site; that stretch reads GAHGKTS.

The protein belongs to the MurCDEF family.

It is found in the cytoplasm. It carries out the reaction UDP-N-acetyl-alpha-D-muramate + L-alanine + ATP = UDP-N-acetyl-alpha-D-muramoyl-L-alanine + ADP + phosphate + H(+). It participates in cell wall biogenesis; peptidoglycan biosynthesis. Functionally, cell wall formation. This Streptococcus thermophilus (strain CNRZ 1066) protein is UDP-N-acetylmuramate--L-alanine ligase.